Here is a 480-residue protein sequence, read N- to C-terminus: Glutamyl-tRNA(Gln) amidotransferase subunit A (480 aa).

Residues K70 and S145 each act as charge relay system in the active site. The active-site Acyl-ester intermediate is S169.

Belongs to the amidase family. GatA subfamily. Heterotrimer of A, B and C subunits.

It catalyses the reaction L-glutamyl-tRNA(Gln) + L-glutamine + ATP + H2O = L-glutaminyl-tRNA(Gln) + L-glutamate + ADP + phosphate + H(+). Functionally, allows the formation of correctly charged Gln-tRNA(Gln) through the transamidation of misacylated Glu-tRNA(Gln) in organisms which lack glutaminyl-tRNA synthetase. The reaction takes place in the presence of glutamine and ATP through an activated gamma-phospho-Glu-tRNA(Gln). This chain is Glutamyl-tRNA(Gln) amidotransferase subunit A, found in Lactobacillus delbrueckii subsp. bulgaricus (strain ATCC 11842 / DSM 20081 / BCRC 10696 / JCM 1002 / NBRC 13953 / NCIMB 11778 / NCTC 12712 / WDCM 00102 / Lb 14).